Consider the following 308-residue polypeptide: Carbonic anhydrase 4 (308 aa).

An N-terminal signal peptide occupies residues 1–18 (MQLLFALLALGALRPLAG). The 261-residue stretch at 21 to 281 (LHWCYEIQAS…LGDRSVFKSQ (261 aa)) folds into the Alpha-carbonic anhydrase domain. Disulfide bonds link cysteine 24–cysteine 34 and cysteine 44–cysteine 225. The N-linked (GlcNAc...) asparagine glycan is linked to asparagine 31. The Proton donor/acceptor role is filled by histidine 86. 3 residues coordinate Zn(2+): histidine 113, histidine 115, and histidine 138. N-linked (GlcNAc...) asparagine glycosylation occurs at asparagine 192. Residue 221–222 (TT) participates in substrate binding. Residue serine 280 is the site of GPI-anchor amidated serine attachment. The propeptide at 281–308 (QAAGQLLPLPLPTLLVPTLACVMAGLLR) is removed in mature form.

It belongs to the alpha-carbonic anhydrase family. As to quaternary structure, interacts with SLC4A4. Zn(2+) serves as cofactor.

It localises to the cell membrane. The enzyme catalyses hydrogencarbonate + H(+) = CO2 + H2O. Its activity is regulated as follows. Inhibited by acetazolamide. Catalyzes the reversible hydration of carbon dioxide into bicarbonate and protons and thus is essential to maintaining intracellular and extracellular pH. May stimulate the sodium/bicarbonate transporter activity of SLC4A4 that acts in pH homeostasis. It is essential for acid overload removal from the retina and retina epithelium, and acid release in the choriocapillaris in the choroid. The chain is Carbonic anhydrase 4 (CA4) from Oryctolagus cuniculus (Rabbit).